The primary structure comprises 430 residues: Transcription factor iws-1 (430 aa).

The span at M1–E14 shows a compositional bias: low complexity. The tract at residues M1–R153 is disordered. The segment covering P15–S33 has biased composition (basic and acidic residues). Residues V52–D63 show a composition bias toward acidic residues. Residues K95–S104 are compositionally biased toward basic residues. Basic and acidic residues predominate over residues V124–E137. Positions Q244 to R321 constitute a TFIIS N-terminal domain. A disordered region spans residues G402–R430. Positions T406 to R420 are enriched in basic and acidic residues.

The protein belongs to the IWS1 family.

The protein localises to the nucleus. Its function is as follows. Transcription factor involved in RNA polymerase II transcription regulation. May function in both SPT15/TBP post-recruitment and recruitment steps of transcription. The protein is Transcription factor iws-1 (iws-1) of Neurospora crassa (strain ATCC 24698 / 74-OR23-1A / CBS 708.71 / DSM 1257 / FGSC 987).